The primary structure comprises 368 residues: Divinyl chlorophyll a/b light-harvesting protein PcbA (368 aa).

6 consecutive transmembrane segments (helical) span residues 27 to 47 (FIAS…ANTL), 63 to 83 (GFVV…NGVI), 89 to 109 (MLVV…GAML), 203 to 223 (VMGG…WHIF), 243 to 263 (FVLS…AFWA), and 307 to 327 (LSNF…WHGL).

The protein belongs to the PsbB/PsbC family. IsiA/Pcb subfamily. As to quaternary structure, the antenna complex consists of divinyl chlorophylls (a and b) and divinyl chlorophyll a/b binding proteins. Forms complexes with PSII, consisting of a PSII dimer and 4 or 8 PcbA subunits. These complexes are also found under conditions of iron-starvation. The cofactor is divinyl chlorophyll a. It depends on divinyl chlorophyll b as a cofactor.

The protein localises to the cellular thylakoid membrane. Its function is as follows. The antenna complex functions as a light receptor, it captures and delivers excitation energy to photosystems II. The Prochlorales pcb genes are not related to higher plant LHCs. This chain is Divinyl chlorophyll a/b light-harvesting protein PcbA (pcbA), found in Prochlorococcus marinus (strain MIT 9313).